The following is a 501-amino-acid chain: Glucan endo-1,3-beta-glucosidase 3 (501 aa).

An N-terminal signal peptide occupies residues 1 to 18; the sequence is MAALLLLFLFLFASSALS. Residues N88 and N107 are each glycosylated (N-linked (GlcNAc...) asparagine). Residue E116 is the Proton donor of the active site. N171 and N253 each carry an N-linked (GlcNAc...) asparagine glycan. The Nucleophile role is filled by E263. N-linked (GlcNAc...) asparagine glycans are attached at residues N295, N353, and N357. An intrachain disulfide couples C361 to C424. N451, N456, N457, and N466 each carry an N-linked (GlcNAc...) asparagine glycan. S470 carries the GPI-anchor amidated serine lipid modification. Positions 471-501 are cleaved as a propeptide — removed in mature form; it reads GCIPKYYHHPHASFGDLTLLSLLLIIALVFL.

It belongs to the glycosyl hydrolase 17 family. Contains two additional disulfide bonds.

It is found in the cell membrane. It carries out the reaction Hydrolysis of (1-&gt;3)-beta-D-glucosidic linkages in (1-&gt;3)-beta-D-glucans.. The polypeptide is Glucan endo-1,3-beta-glucosidase 3 (Arabidopsis thaliana (Mouse-ear cress)).